Here is a 205-residue protein sequence, read N- to C-terminus: Thiamine-phosphate synthase (205 aa).

Residues glutamine 37 to lysine 41 and asparagine 69 each bind 4-amino-2-methyl-5-(diphosphooxymethyl)pyrimidine. Positions 70 and 89 each coordinate Mg(2+). Residue serine 108 participates in 4-amino-2-methyl-5-(diphosphooxymethyl)pyrimidine binding. Threonine 134–serine 136 contacts 2-[(2R,5Z)-2-carboxy-4-methylthiazol-5(2H)-ylidene]ethyl phosphate. 4-amino-2-methyl-5-(diphosphooxymethyl)pyrimidine is bound at residue lysine 137. 2-[(2R,5Z)-2-carboxy-4-methylthiazol-5(2H)-ylidene]ethyl phosphate is bound by residues glycine 165 and isoleucine 185–serine 186.

The protein belongs to the thiamine-phosphate synthase family. Mg(2+) serves as cofactor.

It carries out the reaction 2-[(2R,5Z)-2-carboxy-4-methylthiazol-5(2H)-ylidene]ethyl phosphate + 4-amino-2-methyl-5-(diphosphooxymethyl)pyrimidine + 2 H(+) = thiamine phosphate + CO2 + diphosphate. The catalysed reaction is 2-(2-carboxy-4-methylthiazol-5-yl)ethyl phosphate + 4-amino-2-methyl-5-(diphosphooxymethyl)pyrimidine + 2 H(+) = thiamine phosphate + CO2 + diphosphate. The enzyme catalyses 4-methyl-5-(2-phosphooxyethyl)-thiazole + 4-amino-2-methyl-5-(diphosphooxymethyl)pyrimidine + H(+) = thiamine phosphate + diphosphate. It functions in the pathway cofactor biosynthesis; thiamine diphosphate biosynthesis; thiamine phosphate from 4-amino-2-methyl-5-diphosphomethylpyrimidine and 4-methyl-5-(2-phosphoethyl)-thiazole: step 1/1. Its function is as follows. Condenses 4-methyl-5-(beta-hydroxyethyl)thiazole monophosphate (THZ-P) and 2-methyl-4-amino-5-hydroxymethyl pyrimidine pyrophosphate (HMP-PP) to form thiamine monophosphate (TMP). The chain is Thiamine-phosphate synthase from Clostridium botulinum (strain ATCC 19397 / Type A).